The sequence spans 136 residues: Neuropeptide CCHamide-2 (136 aa).

Residues 1–24 (MKSTISLLLVVICTVVLAAQQSQA) form the signal peptide. A disulfide bridge links Cys-28 with Cys-35. Residue His-39 is modified to Histidine amide. The disordered stretch occupies residues 42 to 78 (RSLSPGSGSGTGVGGGMGEAASGGQEPDYVRPNGLLP). A propeptide spanning residues 43–136 (SLSPGSGSGT…ANSAELNGVN (94 aa)) is cleaved from the precursor. Residues 48–59 (SGSGTGVGGGMG) show a composition bias toward gly residues.

As to expression, expressed in endocrine cells of the larval midgut (at protein level). Also expressed in endocrine cells of the midgut of adult males and females (at protein level). In the midgut, expression occurs mainly in the anterior region (at protein level). In the larval central nervous system, expressed in about 40 neurons in the brain hemispheres and ventral nerve cord (at protein level). Highly expressed in larval and adult gut with low levels in larval and adult brain. Very little expression in the larval fat body. However, another study shows high levels of expression in the larval fat body as well as the larval gut with low levels in the larval central nervous system.

It is found in the secreted. Ligand for the CCHamide-2 receptor CCHa2-R. In one study, shown to be an orexigenic peptide which induces appetite and stimulates food intake, leading to the release of insulin-like peptides which stimulate growth. In another study, shown to be a nutrient-sensitive peptide derived from peripheral tissues which controls growth by directly regulating the production and release of insulin-like peptides. The protein is Neuropeptide CCHamide-2 of Drosophila melanogaster (Fruit fly).